Reading from the N-terminus, the 682-residue chain is Potassium-transporting ATPase ATP-binding subunit (682 aa).

4 helical membrane passes run 34 to 54, 58 to 78, 219 to 239, and 254 to 274; these read PVMFVVWAGSVLTTLLTLAMV, IAGSALFTGVISLWLWFTVLF, IALTILLIALTIVFLLATATL, and VLVALLVCLIPTTIGGLLSAI. Asp-307 functions as the 4-aspartylphosphate intermediate in the catalytic mechanism. Residues Asp-344, Glu-348, 377–384, and Lys-395 each bind ATP; that span reads FTAQSRMS. 2 residues coordinate Mg(2+): Asp-518 and Asp-522. 3 helical membrane-spanning segments follow: residues 588–608, 616–636, and 662–682; these read FAIIPAAFAATYPQLNALNVM, AILSAVIFNALIIIFLIPLAL, and LVVPFIGIKVIDVLLTLLGLA.

It belongs to the cation transport ATPase (P-type) (TC 3.A.3) family. Type IA subfamily. The system is composed of three essential subunits: KdpA, KdpB and KdpC.

It localises to the cell inner membrane. It catalyses the reaction K(+)(out) + ATP + H2O = K(+)(in) + ADP + phosphate + H(+). Its function is as follows. Part of the high-affinity ATP-driven potassium transport (or Kdp) system, which catalyzes the hydrolysis of ATP coupled with the electrogenic transport of potassium into the cytoplasm. This subunit is responsible for energy coupling to the transport system and for the release of the potassium ions to the cytoplasm. The protein is Potassium-transporting ATPase ATP-binding subunit of Salmonella paratyphi A (strain ATCC 9150 / SARB42).